Here is a 600-residue protein sequence, read N- to C-terminus: Oligopeptide-binding protein OppA (600 aa).

An N-terminal signal peptide occupies residues 1-22; that stretch reads MNKLKVTLLASSVVLAATLLSA. Residue Cys-23 is the site of N-palmitoyl cysteine attachment. Cys-23 carries S-diacylglycerol cysteine lipidation.

The protein belongs to the bacterial solute-binding protein 5 family. As to quaternary structure, the complex is composed of two ATP-binding proteins (OppD and OppF), two transmembrane proteins (OppB and OppC) and a solute-binding protein (OppA).

The protein resides in the cell membrane. Part of the ABC transporter complex OppABCDF involved in the uptake of oligopeptides. Essential for uptake of peptides larger than three amino acids and for growth in milk. This Lactococcus lactis subsp. lactis (Streptococcus lactis) protein is Oligopeptide-binding protein OppA.